The primary structure comprises 142 residues: Transcriptional regulator MraZ (142 aa).

2 consecutive SpoVT-AbrB domains span residues 5 to 47 (EYQH…TINE) and 76 to 119 (ACIV…SREK).

Belongs to the MraZ family. In terms of assembly, forms oligomers.

It is found in the cytoplasm. The protein resides in the nucleoid. This chain is Transcriptional regulator MraZ, found in Clostridium botulinum (strain Alaska E43 / Type E3).